We begin with the raw amino-acid sequence, 178 residues long: MSRIGNKTITLPADVTVSQEGAVVTVKGPKGELSREIVSAITMTVEGNEVSFSRDSDDSKTRALHGTTRANVANMVEGVSEGFTKTLKLVGVGYRAAKSGSKLTLSVGYSHPVDFEDREELSVEVPDALTIKVSGISKQKVGDLAAEIRAVRSPEPYKGKGIRYEGEVVRRKEGKTGK.

It belongs to the universal ribosomal protein uL6 family. As to quaternary structure, part of the 50S ribosomal subunit.

Its function is as follows. This protein binds to the 23S rRNA, and is important in its secondary structure. It is located near the subunit interface in the base of the L7/L12 stalk, and near the tRNA binding site of the peptidyltransferase center. The sequence is that of Large ribosomal subunit protein uL6 from Leuconostoc mesenteroides subsp. mesenteroides (strain ATCC 8293 / DSM 20343 / BCRC 11652 / CCM 1803 / JCM 6124 / NCDO 523 / NBRC 100496 / NCIMB 8023 / NCTC 12954 / NRRL B-1118 / 37Y).